A 331-amino-acid polypeptide reads, in one-letter code: uncharacterized protein (331 aa).

2 disordered regions span residues 131–163 (ISHASDQKSRPKPTKPRASRKRAAIAQSKKKRS) and 190–209 (DEQKSRQSTSQPDKEIVQSS). Residues 140 to 162 (RPKPTKPRASRKRAAIAQSKKKR) show a composition bias toward basic residues. A compositionally biased stretch (polar residues) spans 195-209 (RQSTSQPDKEIVQSS).

This is an uncharacterized protein from Caenorhabditis elegans.